The chain runs to 153 residues: 3-hydroxyacyl-[acyl-carrier-protein] dehydratase FabZ (153 aa).

Histidine 53 is an active-site residue.

It belongs to the thioester dehydratase family. FabZ subfamily.

It is found in the cytoplasm. The catalysed reaction is a (3R)-hydroxyacyl-[ACP] = a (2E)-enoyl-[ACP] + H2O. Functionally, involved in unsaturated fatty acids biosynthesis. Catalyzes the dehydration of short chain beta-hydroxyacyl-ACPs and long chain saturated and unsaturated beta-hydroxyacyl-ACPs. This Lawsonia intracellularis (strain PHE/MN1-00) protein is 3-hydroxyacyl-[acyl-carrier-protein] dehydratase FabZ.